Here is a 189-residue protein sequence, read N- to C-terminus: Thymidine kinase (189 aa).

ATP is bound by residues 9-16 and 85-88; these read GTMNSGKT and DESQ. Glu-86 (proton acceptor) is an active-site residue. 4 residues coordinate Zn(2+): Cys-143, Cys-146, Cys-180, and His-183.

This sequence belongs to the thymidine kinase family. As to quaternary structure, homotetramer.

It localises to the cytoplasm. The catalysed reaction is thymidine + ATP = dTMP + ADP + H(+). This chain is Thymidine kinase, found in Streptococcus pyogenes serotype M18 (strain MGAS8232).